The primary structure comprises 293 residues: Transcriptional regulator ICP22 homolog (293 aa).

2 disordered regions span residues 1-49 and 175-293; these read MPHG…QRID and RFLE…SARR. Positions 21 to 31 are enriched in low complexity; the sequence is TPSTSPLIPSL. The segment covering 190 to 210 has biased composition (acidic residues); that stretch reads EECDVSGDESPSEEEEEDEAS. Over residues 272-281 the composition is skewed to basic residues; that stretch reads AAKKRRKRQP. A compositionally biased stretch (basic and acidic residues) spans 282–293; the sequence is PKGERPTKSARR.

Belongs to the herpesviridae ICP22 family.

In Equus caballus (Horse), this protein is Transcriptional regulator ICP22 homolog (IR4).